We begin with the raw amino-acid sequence, 750 residues long: Meiosis protein mei2 (750 aa).

Residues 1–20 (MIMETESPLSITSPSPSDST) form a disordered region. Over residues 7–20 (SPLSITSPSPSDST) the composition is skewed to polar residues. 2 RRM domains span residues 195–270 (RYLF…FCQR) and 293–361 (LLLN…CLQV).

In terms of assembly, binds rad24 when phosphorylated. Post-translationally, inactivated by phosphorylation by ran1/pat1.

Functionally, crucial for commitment to meiosis but it is not sufficient itself for the commitment. May be a splicing regulator. This is Meiosis protein mei2 (mei2) from Schizosaccharomyces pombe (strain 972 / ATCC 24843) (Fission yeast).